The chain runs to 410 residues: TNF receptor-associated factor family protein DDB_G0279745 (410 aa).

Residues 27–67 form an RING-type; degenerate zinc finger; the sequence is CVICSFPLFDGLQCKRGHGACKSCWEKIIGENGKKECHSCR. 2 TRAF-type zinc fingers span residues 81–154 and 154–213; these read YLEK…SLEQ and QHQN…DESI. A coiled-coil region spans residues 216 to 284; that stretch reads LSNSIVEIQK…SMINKLDDSA (69 aa).

It belongs to the TNF receptor-associated factor family.

It localises to the cytoplasm. Its function is as follows. Probable adapter protein and signal transducer that links members of the tumor necrosis factor receptor family to different signaling pathways by association with the receptor cytoplasmic domain and kinases. This is TNF receptor-associated factor family protein DDB_G0279745 from Dictyostelium discoideum (Social amoeba).